The following is a 121-amino-acid chain: Large ribosomal subunit protein bL19 (121 aa).

This sequence belongs to the bacterial ribosomal protein bL19 family.

This protein is located at the 30S-50S ribosomal subunit interface and may play a role in the structure and function of the aminoacyl-tRNA binding site. In Borrelia garinii subsp. bavariensis (strain ATCC BAA-2496 / DSM 23469 / PBi) (Borreliella bavariensis), this protein is Large ribosomal subunit protein bL19.